Consider the following 236-residue polypeptide: Pyridoxal 5'-phosphate synthase subunit PdxT (236 aa).

61-63 (GES) is a binding site for L-glutamine. The Nucleophile role is filled by C93. L-glutamine is bound by residues R127 and 163-164 (IR). Catalysis depends on charge relay system residues H215 and E217.

The protein belongs to the glutaminase PdxT/SNO family. In the presence of PdxS, forms a dodecamer of heterodimers. Only shows activity in the heterodimer.

The enzyme catalyses aldehydo-D-ribose 5-phosphate + D-glyceraldehyde 3-phosphate + L-glutamine = pyridoxal 5'-phosphate + L-glutamate + phosphate + 3 H2O + H(+). The catalysed reaction is L-glutamine + H2O = L-glutamate + NH4(+). It functions in the pathway cofactor biosynthesis; pyridoxal 5'-phosphate biosynthesis. In terms of biological role, catalyzes the hydrolysis of glutamine to glutamate and ammonia as part of the biosynthesis of pyridoxal 5'-phosphate. The resulting ammonia molecule is channeled to the active site of PdxS. The chain is Pyridoxal 5'-phosphate synthase subunit PdxT from Pseudarthrobacter chlorophenolicus (strain ATCC 700700 / DSM 12829 / CIP 107037 / JCM 12360 / KCTC 9906 / NCIMB 13794 / A6) (Arthrobacter chlorophenolicus).